The primary structure comprises 130 residues: MASVDVSQNTSDINFSVSAADKVAELIKEEDNSDLNLRVSITGGGCSGFQYGFSFDEQINDDDTVIIQQCSDGKSSVKLLIDSMSYQYLHDAEIDYIKGIQGEQFVIRNPNAKTTCGCGSSFSIGDEDDL.

Residues cysteine 46, cysteine 116, and cysteine 118 each coordinate iron-sulfur cluster.

The protein belongs to the HesB/IscA family. In terms of assembly, homodimer. Requires iron-sulfur cluster as cofactor.

In terms of biological role, required for insertion of 4Fe-4S clusters for at least IspG. In Legionella pneumophila (strain Lens), this protein is Iron-sulfur cluster insertion protein ErpA.